Consider the following 297-residue polypeptide: Acetaldehyde dehydrogenase (297 aa).

15–18 lines the NAD(+) pocket; that stretch reads SGSI. Residue Cys130 is the Acyl-thioester intermediate of the active site. NAD(+) is bound by residues 162-170 and Asn272; that span reads SAGIATREN.

Belongs to the acetaldehyde dehydrogenase family.

It carries out the reaction acetaldehyde + NAD(+) + CoA = acetyl-CoA + NADH + H(+). The protein is Acetaldehyde dehydrogenase (mhpF) of Burkholderia pseudomallei (strain K96243).